The following is a 218-amino-acid chain: MDTNFWLERWQLGHTGFHQQEVLPLLQKHWHALDLPKESRVLVPLCGKTLDMHWLASQGHRVLGVELSPLAVTQFFDEAGLQPQRHTSAAGEHFIAGPIEIICGDAFALDASVLADCTAVYDRAALVALPAELRQRYLQTVYVQLPTHCRGLLITLEYPQAEKAGPPFSVDATHVHALFDAAWQVDQLERRDILDQEPRFRDEGVTGLSTAVYRLQRR.

Residues W10, L45, E66, and R123 each contribute to the S-adenosyl-L-methionine site.

The protein belongs to the class I-like SAM-binding methyltransferase superfamily. TPMT family.

The protein localises to the cytoplasm. The enzyme catalyses S-adenosyl-L-methionine + a thiopurine = S-adenosyl-L-homocysteine + a thiopurine S-methylether.. The polypeptide is Thiopurine S-methyltransferase (Xanthomonas axonopodis pv. citri (strain 306)).